The sequence spans 317 residues: MEQLRGLYPPLAAYDSGWLDTGDGHRIYWELSGNPNGKPAVFIHGGPGGGISPHHRQLFDPERYKVLLFDQRGCGRSRPHASLDNNTTWHLVADIERLREMAGVEQWLVFGGSWGSTLALAYAQTHPERVSEMVLRGIFTLRKQRLHWYYQDGASRFFPEKWERVLSILSDDERKDVIAAYRQRLTSADPQVQLEAAKLWSVWEGETVTLLPSRESASFGEDDFALAFARIENHYFTHLGFLESDDQLLRNVPLIRHIPAVIVHGRYDMACQVQNAWDLAKAWPEAELHIVEGAGHSYDEPGILHQLMIATDRFAGK.

An AB hydrolase-1 domain is found at 41–296 (VFIHGGPGGG…ELHIVEGAGH (256 aa)). Serine 113 acts as the Nucleophile in catalysis. Residue aspartate 268 is part of the active site. The Proton donor role is filled by histidine 296.

It belongs to the peptidase S33 family. As to quaternary structure, monomer.

Its subcellular location is the cytoplasm. The catalysed reaction is Release of N-terminal proline from a peptide.. In terms of biological role, specifically catalyzes the removal of N-terminal proline residues from peptides. This is Proline iminopeptidase (pip) from Serratia marcescens.